We begin with the raw amino-acid sequence, 369 residues long: MDENETQFNKLNQVKNKLKIGVFGIGGAGNNIVDASLYHYPNLASENIHFYAINSDLQHLAFKTNVKNKLLIQDHTNKGFGAGGDPAKGASLAISFQEQFNTLTDGYDFCILVAGFGKGTGTGATPVFSKILKTKKILNVAIVTYPSLNEGLTVRNKATKGLEILNKATDSYMLFCNEKCTNGIYQLANTEIVSAIKNLIELITIPLQQNIDFEDVRAFFQTKKTNQDQQLFTVTHPFSFSFDSKDSIEQFAKQFKNFEKVSYFDHSIVGAKKVLLKANINQKIVKLNFKQIQDIIWTKIDNYQLEIRLGVDFVTTIPNIQIFILSEHKNPVSLPIDNKSTENNQNKLKLLDELKELGMKYVKHQNQIY.

GTP-binding positions include 27–31, 119–121, Glu150, and Asn189; these read GAGNN and GTG.

It belongs to the FtsZ family. Homodimer. Polymerizes to form a dynamic ring structure in a strictly GTP-dependent manner. Interacts directly with several other division proteins.

Its subcellular location is the cytoplasm. Functionally, essential cell division protein that forms a contractile ring structure (Z ring) at the future cell division site. The regulation of the ring assembly controls the timing and the location of cell division. One of the functions of the FtsZ ring is to recruit other cell division proteins to the septum to produce a new cell wall between the dividing cells. Binds GTP and shows GTPase activity. The sequence is that of Cell division protein FtsZ from Mycoplasma genitalium (strain ATCC 33530 / DSM 19775 / NCTC 10195 / G37) (Mycoplasmoides genitalium).